The primary structure comprises 150 residues: uncharacterized protein (150 aa).

The signal sequence occupies residues 1-21 (MAMEMAMMGLLGTVVGASAMG).

This is an uncharacterized protein from Mycobacterium tuberculosis (strain CDC 1551 / Oshkosh).